Reading from the N-terminus, the 607-residue chain is Dopamine receptor 3 (607 aa).

Residues 1 to 23 (MLAGQHHVTDIESPLMVVLWRVA) are Extracellular-facing. Residues 24-44 (AGVFLPLVPTMAVFGNVLVIM) form a helical membrane-spanning segment. Topologically, residues 45–58 (SVFRERSLQTVTNM) are cytoplasmic. Residues 59–79 (LIVSLAVSDFMVAIGVMSFGV) form a helical membrane-spanning segment. Over 80-96 (YYEWNDFKWGLGSFFCH) the chain is Extracellular. Cysteines 95 and 173 form a disulfide. The helical transmembrane segment at 97–117 (VYQALDVACSTASILNLLAIS) threads the bilayer. The Cytoplasmic segment spans residues 118-141 (LDRYIAIGHPISYAQYGARGGRAM). A helical transmembrane segment spans residues 142-162 (ISITIVWGVSVAVALPLLLGV). Topologically, residues 163–182 (NPMEENDLQECELANPYFNM) are extracellular. The chain crosses the membrane as a helical span at residues 183 to 203 (ISSIFSFFIPCIAMIILYTII). Residues 204-523 (FRRLRQRERA…TKQMRREHKA (320 aa)) lie on the Cytoplasmic side of the membrane. Positions 402–435 (VPSIQDEKKLSQKSNDLPFSHQNGTHKQKLLPNP) are disordered. The segment covering 413–424 (QKSNDLPFSHQN) has biased composition (polar residues). Residues 524–544 (TVTLAVVLAVFLFCWLPFFVL) form a helical membrane-spanning segment. Over 545 to 558 (HLSNSICLIIDENS) the chain is Extracellular. The chain crosses the membrane as a helical span at residues 559-579 (ACVGFLPLYLATWLGYLNSSL). Topologically, residues 580-607 (NPLIYTVFDQRFRNAFRNILSCGIFKKR) are cytoplasmic.

This sequence belongs to the G-protein coupled receptor 1 family. Expressed in the neurons of the head, ventral cord and tail with weak expression observed in body wall muscles and PVD neurons. In the ventral cord, expressed strongly in GABAergic neurons with weaker expression in cholinergic motor neurons. Expressed in cholinergic SIA neurons and octopaminergic RIC neurons. In males, expressed in the dorsal and ventral spicule protractor and retractor muscles, and the sensory post-cloacal sensilla B (PCB) neuron. Expressed in the head acetylcholine neurons. Expressed in the AVA, AVB, AVD and AVE command interneurons. Expressed in premotor interneurons.

The protein resides in the cell membrane. In terms of biological role, G-protein coupled receptor which binds to the neurotransmitter dopamine with high affinity leading to the activation of an associated G-protein and downstream signaling pathways. Couples to G-proteins to inhibit adenylate cyclase (AC) activity and cAMP production. Antagonizes the D1-like dopamine receptor dop-1 to negatively regulate the rate of locomotion. Negatively regulates locomotion through the activation of goa-1 subunit proteins which inactivates the unc-77/nca-1 and nca-2 ion-channels in the command interneurons. Inhibits early-stage swimming by modulating the unc-77/nca-1 and nca-2 ion channels of premotor interneurons. In GABAergic, RIC, and SIA neurons, antagonizes the function of dop-1 to play a role in behavioral plasticity and regulate the decision-making process when conflicting alternatives are present. Antagonizes octopamine signaling in response to food by promoting the dopamine-mediated suppression of crh-1/CREB1 transcription factor activation in cholinergic SIA neurons. This is most likely in association with the G(o)-alpha G-protein subunit goa-1. Promotes male mating behavior by antagonizing acetylcholine signaling to control the protrusion of copulatory spicules from the tail of males during hermaphrodite vulval location. Under mitochondria stress, plays a role in bacterial preference, resulting in learned avoidance behavior. The polypeptide is Dopamine receptor 3 (Caenorhabditis elegans).